The primary structure comprises 408 residues: Aminoacylase-1 (408 aa).

Histidine 80 is a Zn(2+) binding site. The active site involves aspartate 82. Aspartate 113 contacts Zn(2+). Glutamate 147 acts as the Proton acceptor in catalysis. Residues glutamate 148, glutamate 175, and histidine 373 each coordinate Zn(2+).

Belongs to the peptidase M20A family. In terms of assembly, homodimer. Interacts with SPHK1. Requires Zn(2+) as cofactor.

Its subcellular location is the cytoplasm. The enzyme catalyses an N-acyl-L-amino acid + H2O = an L-alpha-amino acid + a carboxylate. The catalysed reaction is N-acetyl-L-methionine + H2O = L-methionine + acetate. It catalyses the reaction N-acetyl-L-glutamine + H2O = L-glutamine + acetate. In terms of biological role, catalyzes the hydrolysis of N-acetylated amino acids to acetate and free amino acids. In Mus musculus (Mouse), this protein is Aminoacylase-1 (Acy1).